The following is a 468-amino-acid chain: Secretogranin-3 (468 aa).

Residues 1-19 (MGFLGTGTWILVLVLPIQA) form the signal peptide. Residues 23 to 69 (PGGSQDKSLHNRELSAERPLNEQIAEAEEDKIKKTYPPENKPGQSNY) form a disordered region. Positions 29 to 42 (KSLHNRELSAERPL) are enriched in basic and acidic residues. Ser-37 carries the post-translational modification Phosphoserine. Residue Ser-37 is glycosylated (O-linked (Xyl...) (chondroitin sulfate) serine). O-linked (GalNAc...) threonine glycans are attached at residues Thr-216 and Thr-231. The segment at 353–406 (KLFPAPSEKSHEETDSTKEEAAKMEKEYGSLKDSTKDDNSNPGGKTDEPKGKTE) is disordered. Ser-359 carries an O-linked (GalNAc...) serine glycan. Positions 360-406 (EKSHEETDSTKEEAAKMEKEYGSLKDSTKDDNSNPGGKTDEPKGKTE) are enriched in basic and acidic residues. Position 362 is a phosphoserine (Ser-362).

Interacts with CHGA. Interacts with secretogranin II/SCG2. Interacts (via C-terminus) with CPE. Post-translationally, O-glycosylated. Detected in urine (at protein level). Expressed in brain, heart, kidney, liver and skeletal muscle.

It localises to the cytoplasmic vesicle. The protein resides in the secretory vesicle. It is found in the secretory vesicle membrane. Its subcellular location is the secreted. In terms of biological role, member of the granin protein family that regulates the biogenesis of secretory granules. Acts as a sorting receptor for intragranular proteins including chromogranin A/CHGA. May also play a role in angiogenesis. Promotes endothelial proliferation, migration and tube formation through MEK/ERK signaling pathway. This Homo sapiens (Human) protein is Secretogranin-3 (SCG3).